The primary structure comprises 217 residues: Imidazole glycerol phosphate synthase subunit HisH (217 aa).

The Glutamine amidotransferase type-1 domain maps to R5–L217. Residue C93 is the Nucleophile of the active site. Active-site residues include H199 and E201.

As to quaternary structure, heterodimer of HisH and HisF.

It localises to the cytoplasm. It carries out the reaction 5-[(5-phospho-1-deoxy-D-ribulos-1-ylimino)methylamino]-1-(5-phospho-beta-D-ribosyl)imidazole-4-carboxamide + L-glutamine = D-erythro-1-(imidazol-4-yl)glycerol 3-phosphate + 5-amino-1-(5-phospho-beta-D-ribosyl)imidazole-4-carboxamide + L-glutamate + H(+). The enzyme catalyses L-glutamine + H2O = L-glutamate + NH4(+). The protein operates within amino-acid biosynthesis; L-histidine biosynthesis; L-histidine from 5-phospho-alpha-D-ribose 1-diphosphate: step 5/9. Functionally, IGPS catalyzes the conversion of PRFAR and glutamine to IGP, AICAR and glutamate. The HisH subunit catalyzes the hydrolysis of glutamine to glutamate and ammonia as part of the synthesis of IGP and AICAR. The resulting ammonia molecule is channeled to the active site of HisF. The protein is Imidazole glycerol phosphate synthase subunit HisH of Helicobacter hepaticus (strain ATCC 51449 / 3B1).